The primary structure comprises 643 residues: Translation factor GUF1, mitochondrial (643 aa).

The transit peptide at 1 to 18 directs the protein to the mitochondrion; it reads MLASQAIKRIFHRSWKPL. One can recognise a tr-type G domain in the interval 43-226; the sequence is ENYRNFSIVA…AIIDRIPPPT (184 aa). Residues 52 to 59, 118 to 122, and 172 to 175 each bind GTP; these read AHIDHGKS, DTPGH, and NKID.

It belongs to the TRAFAC class translation factor GTPase superfamily. Classic translation factor GTPase family. LepA subfamily.

The protein resides in the mitochondrion inner membrane. The enzyme catalyses GTP + H2O = GDP + phosphate + H(+). Functionally, promotes mitochondrial protein synthesis. May act as a fidelity factor of the translation reaction, by catalyzing a one-codon backward translocation of tRNAs on improperly translocated ribosomes. Binds to mitochondrial ribosomes in a GTP-dependent manner. This Zygosaccharomyces rouxii (strain ATCC 2623 / CBS 732 / NBRC 1130 / NCYC 568 / NRRL Y-229) protein is Translation factor GUF1, mitochondrial.